The primary structure comprises 342 residues: Phosphate acyltransferase (342 aa).

It belongs to the PlsX family. As to quaternary structure, homodimer. Probably interacts with PlsY.

The protein localises to the cytoplasm. It carries out the reaction a fatty acyl-[ACP] + phosphate = an acyl phosphate + holo-[ACP]. It participates in lipid metabolism; phospholipid metabolism. Its function is as follows. Catalyzes the reversible formation of acyl-phosphate (acyl-PO(4)) from acyl-[acyl-carrier-protein] (acyl-ACP). This enzyme utilizes acyl-ACP as fatty acyl donor, but not acyl-CoA. The polypeptide is Phosphate acyltransferase (Shewanella baltica (strain OS155 / ATCC BAA-1091)).